A 707-amino-acid polypeptide reads, in one-letter code: Protein O-mannosyl-transferase TMEM260 (707 aa).

8 helical membrane passes run 28-48 (GGVA…PPSV), 71-91 (YPLF…GSIA), 94-114 (VNLL…FTVF), 141-161 (IAAE…ALTV), 189-209 (NQHT…FQLL), 222-242 (LSLY…SSYL), 318-338 (NPSL…FFAW), and 356-376 (FWMQ…AAVV). At 377–707 (SETNRVLNSN…LQSLRNRKNV (331 aa)) the chain is on the lumenal side. N-linked (GlcNAc...) asparagine glycans are attached at residues Asn-407, Asn-535, and Asn-568.

It belongs to the glycosyltransferase 117 (GT117) family. In terms of tissue distribution, expressed in brain, heart, kidney, liver, lung, pancreas and placenta but are not detected in skeletal muscle.

Its subcellular location is the endoplasmic reticulum membrane. The protein localises to the membrane. It catalyses the reaction a di-trans,poly-cis-dolichyl beta-D-mannosyl phosphate + L-seryl-[protein] = 3-O-(alpha-D-mannosyl)-L-seryl-[protein] + a di-trans,poly-cis-dolichyl phosphate + H(+). The enzyme catalyses a di-trans,poly-cis-dolichyl beta-D-mannosyl phosphate + L-threonyl-[protein] = 3-O-(alpha-D-mannosyl)-L-threonyl-[protein] + a di-trans,poly-cis-dolichyl phosphate + H(+). In terms of biological role, O-mannosyl-transferase that transfers mannosyl residues to the hydroxyl group of serine or threonine residues of proteins. Specifically glycosylates the IPT/TIG domain of target proteins, such as MET and MST1R/RON. TMEM260-mediated O-mannosylated residues are composed of single mannose glycans that are not elongated or modified. The protein is Protein O-mannosyl-transferase TMEM260 of Homo sapiens (Human).